Here is an 87-residue protein sequence, read N- to C-terminus: Small ribosomal subunit protein bS16 (87 aa).

The protein belongs to the bacterial ribosomal protein bS16 family.

The chain is Small ribosomal subunit protein bS16 from Desulfatibacillum aliphaticivorans.